Consider the following 106-residue polypeptide: MNKEKLSDHLKSEWKKIDQTANPSIPNQKELLHQLSQMKAEYRKKLLQEIILFVFCALMVVSAAILAFTQAPAVFIVLQVCVLAVLPILIAAEKKRHLGECEVKRG.

2 helical membrane passes run 46–68 (LLQE…ILAF) and 73–92 (AVFI…LIAA).

Its subcellular location is the cell membrane. This is an uncharacterized protein from Bacillus subtilis (strain 168).